A 1005-amino-acid polypeptide reads, in one-letter code: Probable beta-galactosidase A (1005 aa).

The first 18 residues, 1–18, serve as a signal peptide directing secretion; it reads MKLLSVAAVALLAAQAAG. Substrate contacts are provided by Tyr96, Asn140, Ala141, and Glu142. Asn156 carries an N-linked (GlcNAc...) asparagine glycan. Residue Asn199 participates in substrate binding. Glu200 functions as the Proton donor in the catalytic mechanism. The cysteines at positions 205 and 206 are disulfide-linked. Tyr260 lines the substrate pocket. Cys266 and Cys315 are oxidised to a cystine. Glu298 serves as the catalytic Nucleophile. A substrate-binding site is contributed by Tyr364. N-linked (GlcNAc...) asparagine glycosylation is found at Asn373, Asn402, Asn453, Asn478, Asn522, Asn622, Asn760, Asn777, Asn805, and Asn914.

This sequence belongs to the glycosyl hydrolase 35 family.

The protein localises to the secreted. It carries out the reaction Hydrolysis of terminal non-reducing beta-D-galactose residues in beta-D-galactosides.. In terms of biological role, cleaves beta-linked terminal galactosyl residues from gangliosides, glycoproteins, and glycosaminoglycans. The polypeptide is Probable beta-galactosidase A (lacA) (Aspergillus flavus (strain ATCC 200026 / FGSC A1120 / IAM 13836 / NRRL 3357 / JCM 12722 / SRRC 167)).